A 670-amino-acid chain; its full sequence is Segment polarity protein dishevelled homolog DVL-1 (670 aa).

One can recognise a DIX domain in the interval Met-1–Glu-85. A disordered region spans residues Ser-89–Phe-237. The span at Ser-142–Arg-151 shows a compositional bias: basic residues. Residues Asn-152–Val-171 show a composition bias toward basic and acidic residues. Over residues Asp-176–Val-192 the composition is skewed to low complexity. Phosphoserine is present on Ser-194. Low complexity predominate over residues Thr-200–Arg-214. The segment covering Leu-215–Leu-228 has biased composition (basic residues). A PDZ domain is found at Thr-251–Glu-323. One can recognise a DEP domain in the interval Pro-400–Asp-474. Residues Pro-518–Ala-642 form a disordered region. Residues Pro-526 to Arg-555 show a composition bias toward low complexity. Residues Ser-600–Ala-611 show a composition bias toward polar residues.

Belongs to the DSH family. As to quaternary structure, interacts with CXXC4. Interacts (via PDZ domain) with NXN. Interacts with BRD7 and INVS. Interacts (via PDZ domain) with VANGL1 and VANGL2 (via C-terminus). Interacts with ARRB1; the interaction is enhanced by phosphorylation of DVL1. Interacts with CYLD. Interacts (via PDZ domain) with RYK. Self-associates (via DIX domain) and forms higher homooligomers. Interacts (via PDZ domain) with DACT1 and FZD7, where DACT1 and FZD7 compete for the same binding site. Interacts (via DEP domain) with MUSK; the interaction is direct and mediates the formation a DVL1, MUSK and PAK1 ternary complex involved in AChR clustering. Interacts (via PDZ domain) with TMEM88. Interacts with DCDC2. Interacts with FOXK2. Interacts with PKD1 (via extracellular domain). Interacts (via PDZ domain) with CCDC88C/DAPLE; competes with CCDC88C for binding to frizzled receptor FZD7 and dissociates from CCDC88C following initiation of non-canonical Wnt signaling when CCDC88C displaces DVL1 from ligand-activated FZD7. Post-translationally, ubiquitinated; undergoes both 'Lys-48'-linked ubiquitination, leading to its subsequent degradation by the ubiquitin-proteasome pathway, and 'Lys-63'-linked ubiquitination. The interaction with INVS is required for ubiquitination. Deubiquitinated by CYLD, which acts on 'Lys-63'-linked ubiquitin chains.

It is found in the cell membrane. The protein localises to the cytoplasm. Its subcellular location is the cytosol. The protein resides in the cytoplasmic vesicle. Functionally, participates in Wnt signaling by binding to the cytoplasmic C-terminus of frizzled family members and transducing the Wnt signal to down-stream effectors. Plays a role both in canonical and non-canonical Wnt signaling. Plays a role in the signal transduction pathways mediated by multiple Wnt genes. Required for LEF1 activation upon WNT1 and WNT3A signaling. DVL1 and PAK1 form a ternary complex with MUSK which is important for MUSK-dependent regulation of AChR clustering during the formation of the neuromuscular junction (NMJ). This chain is Segment polarity protein dishevelled homolog DVL-1 (DVL1), found in Pan troglodytes (Chimpanzee).